Here is a 72-residue protein sequence, read N- to C-terminus: UPF0337 protein bsl2407 (72 aa).

The interval 1 to 55 (MGSTTDKIKGNANEAIGKAKQGIGEATGSDRLKGEGVVQEVKGKGQQAMGDAKDA) is disordered. Low complexity predominate over residues 35–47 (EGVVQEVKGKGQQ).

It belongs to the UPF0337 (CsbD) family.

This chain is UPF0337 protein bsl2407, found in Bradyrhizobium diazoefficiens (strain JCM 10833 / BCRC 13528 / IAM 13628 / NBRC 14792 / USDA 110).